Consider the following 448-residue polypeptide: GTPase Der (448 aa).

2 consecutive EngA-type G domains span residues 2–171 (FTVV…PDTQ) and 181–364 (PKIA…EEYS). GTP contacts are provided by residues 8 to 15 (GRPNVGKS), 58 to 62 (DTGGF), 123 to 126 (NKID), 187 to 194 (GRPNVGKS), 234 to 238 (DTAGI), and 305 to 308 (NKWD). One can recognise a KH-like domain in the interval 365 to 448 (KRVSTSELNR…PINIKIKQRK (84 aa)).

It belongs to the TRAFAC class TrmE-Era-EngA-EngB-Septin-like GTPase superfamily. EngA (Der) GTPase family. Associates with the 50S ribosomal subunit.

GTPase that plays an essential role in the late steps of ribosome biogenesis. In Thermodesulfovibrio yellowstonii (strain ATCC 51303 / DSM 11347 / YP87), this protein is GTPase Der.